We begin with the raw amino-acid sequence, 333 residues long: T-cell surface glycoprotein CD1c (333 aa).

Residues 1-17 (MLFLQFLLLALLLPGGD) form the signal peptide. Residues 18–302 (NADASQEHVS…ILYWGHHFSM (285 aa)) are Extracellular-facing. Asn38, Asn70, Asn75, and Asn146 each carry an N-linked (GlcNAc...) asparagine glycan. Intrachain disulfides connect Cys120–Cys185 and Cys225–Cys280. Positions 206–296 (PEAWLSSRPS…LGGQDIILYW (91 aa)) constitute an Ig-like domain. The helical transmembrane segment at 303–323 (NWIALVVIVPLVILIVLVLWF) threads the bilayer. At 324–333 (KKHCSYQDIL) the chain is on the cytoplasmic side. The Internalization signal motif lies at 329 to 332 (YQDI).

In terms of assembly, heterodimer with B2M (beta-2-microglobulin). As to expression, expressed on cortical thymocytes, on certain T-cell leukemias, and in various other tissues.

It localises to the cell membrane. It is found in the endosome membrane. The protein localises to the lysosome. Its function is as follows. Antigen-presenting protein that binds self and non-self lipid and glycolipid antigens and presents them to T-cell receptors on natural killer T-cells. The protein is T-cell surface glycoprotein CD1c (CD1C) of Homo sapiens (Human).